The primary structure comprises 887 residues: Bifunctional uridylyltransferase/uridylyl-removing enzyme (887 aa).

The uridylyltransferase stretch occupies residues 1-337; sequence MINTSPLLNY…RLPNYERKIE (337 aa). The tract at residues 339–699 is uridylyl-removing; it reads VNDHFKIVDN…AHRKAAQDAV (361 aa). The HD domain maps to 457–579; that stretch reads VDAHTLLLLR…LGDMEHLDYL (123 aa). ACT domains are found at residues 700 to 782 and 809 to 887; these read QIFI…LMQR and MVEI…ICQH.

The protein belongs to the GlnD family. Mg(2+) is required as a cofactor.

It carries out the reaction [protein-PII]-L-tyrosine + UTP = [protein-PII]-uridylyl-L-tyrosine + diphosphate. The catalysed reaction is [protein-PII]-uridylyl-L-tyrosine + H2O = [protein-PII]-L-tyrosine + UMP + H(+). Its activity is regulated as follows. Uridylyltransferase (UTase) activity is inhibited by glutamine, while glutamine activates uridylyl-removing (UR) activity. Its function is as follows. Modifies, by uridylylation and deuridylylation, the PII regulatory proteins (GlnB and homologs), in response to the nitrogen status of the cell that GlnD senses through the glutamine level. Under low glutamine levels, catalyzes the conversion of the PII proteins and UTP to PII-UMP and PPi, while under higher glutamine levels, GlnD hydrolyzes PII-UMP to PII and UMP (deuridylylation). Thus, controls uridylylation state and activity of the PII proteins, and plays an important role in the regulation of nitrogen assimilation and metabolism. This Acinetobacter baumannii (strain ACICU) protein is Bifunctional uridylyltransferase/uridylyl-removing enzyme.